A 138-amino-acid polypeptide reads, in one-letter code: Large ribosomal subunit protein uL16 (138 aa).

Positions 1 to 19 (MLIPRKVAHRKQHHPKRTG) are enriched in basic residues. Residues 1 to 22 (MLIPRKVAHRKQHHPKRTGAAK) form a disordered region.

The protein belongs to the universal ribosomal protein uL16 family. As to quaternary structure, part of the 50S ribosomal subunit.

In terms of biological role, binds 23S rRNA and is also seen to make contacts with the A and possibly P site tRNAs. The polypeptide is Large ribosomal subunit protein uL16 (Parafrankia sp. (strain EAN1pec)).